The primary structure comprises 556 residues: Formate--tetrahydrofolate ligase (556 aa).

65 to 72 (TPAGEGKS) contacts ATP.

The protein belongs to the formate--tetrahydrofolate ligase family.

It carries out the reaction (6S)-5,6,7,8-tetrahydrofolate + formate + ATP = (6R)-10-formyltetrahydrofolate + ADP + phosphate. The protein operates within one-carbon metabolism; tetrahydrofolate interconversion. The protein is Formate--tetrahydrofolate ligase of Streptococcus uberis (strain ATCC BAA-854 / 0140J).